Consider the following 254-residue polypeptide: Thiazole synthase (254 aa).

K96 acts as the Schiff-base intermediate with DXP in catalysis. Residues G157, 183 to 184 (AG), and 205 to 206 (NT) each bind 1-deoxy-D-xylulose 5-phosphate.

Belongs to the ThiG family. As to quaternary structure, homotetramer. Forms heterodimers with either ThiH or ThiS.

It localises to the cytoplasm. It catalyses the reaction [ThiS sulfur-carrier protein]-C-terminal-Gly-aminoethanethioate + 2-iminoacetate + 1-deoxy-D-xylulose 5-phosphate = [ThiS sulfur-carrier protein]-C-terminal Gly-Gly + 2-[(2R,5Z)-2-carboxy-4-methylthiazol-5(2H)-ylidene]ethyl phosphate + 2 H2O + H(+). Its pathway is cofactor biosynthesis; thiamine diphosphate biosynthesis. Functionally, catalyzes the rearrangement of 1-deoxy-D-xylulose 5-phosphate (DXP) to produce the thiazole phosphate moiety of thiamine. Sulfur is provided by the thiocarboxylate moiety of the carrier protein ThiS. In vitro, sulfur can be provided by H(2)S. In Clostridium perfringens (strain SM101 / Type A), this protein is Thiazole synthase.